The primary structure comprises 163 residues: UPF0763 protein C8J_0930 (163 aa).

It belongs to the UPF0763 family.

The sequence is that of UPF0763 protein C8J_0930 from Campylobacter jejuni subsp. jejuni serotype O:6 (strain 81116 / NCTC 11828).